The sequence spans 1012 residues: DNA polymerase catalytic subunit (1012 aa).

This sequence belongs to the DNA polymerase type-B family.

The protein resides in the host nucleus. It catalyses the reaction DNA(n) + a 2'-deoxyribonucleoside 5'-triphosphate = DNA(n+1) + diphosphate. Functionally, replicates viral genomic DNA. This chain is DNA polymerase catalytic subunit (U38), found in Human herpesvirus 6B (strain Z29) (HHV-6 variant B).